We begin with the raw amino-acid sequence, 628 residues long: Exonuclease V, mitochondrial (628 aa).

The transit peptide at 1–21 (MSRFWHFKKFYFTSCYSMQRM) directs the protein to the mitochondrion. The segment at 37-58 (TSEHEQVQSISKEESRSLSSND) is disordered. Residues 38-52 (SEHEQVQSISKEESR) are compositionally biased toward basic and acidic residues. [4Fe-4S] cluster is bound by residues cysteine 164, cysteine 586, cysteine 589, and cysteine 595.

Belongs to the EXO5 family. Monomer. The cofactor is Mg(2+). [4Fe-4S] cluster serves as cofactor.

Its subcellular location is the mitochondrion. Single strand DNA specific 5' exonuclease involved in mitochondrial DNA replication and recombination. Releases dinucleotides as main products of catalysis. Has the capacity to slide across 5'double-stranded DNA or 5'RNA sequences and resumes cutting two nucleotides downstream of the double-stranded-to-single-stranded junction or RNA-to-DNA junction, respectively. The chain is Exonuclease V, mitochondrial (DEM1) from Candida albicans (strain SC5314 / ATCC MYA-2876) (Yeast).